The primary structure comprises 437 residues: Glycogen synthase (437 aa).

Position 15 (lysine 15) interacts with ADP-alpha-D-glucose.

Belongs to the glycosyltransferase 1 family. Bacterial/plant glycogen synthase subfamily.

The catalysed reaction is [(1-&gt;4)-alpha-D-glucosyl](n) + ADP-alpha-D-glucose = [(1-&gt;4)-alpha-D-glucosyl](n+1) + ADP + H(+). It participates in glycan biosynthesis; glycogen biosynthesis. Synthesizes alpha-1,4-glucan chains using ADP-glucose. This chain is Glycogen synthase, found in Thermus thermophilus (strain ATCC 27634 / DSM 579 / HB8).